The primary structure comprises 394 residues: Elongation factor Tu (394 aa).

Residues 10–204 (KPHVNVGTIG…ALDTYIPEPE (195 aa)) form the tr-type G domain. Residues 19-26 (GHVDHGKT) form a G1 region. Position 19 to 26 (19 to 26 (GHVDHGKT)) interacts with GTP. Threonine 26 is a binding site for Mg(2+). Positions 60–64 (GITIN) are G2. A G3 region spans residues 81-84 (DCPG). GTP is bound by residues 81–85 (DCPGH) and 136–139 (NKCD). Residues 136–139 (NKCD) form a G4 region. The G5 stretch occupies residues 174–176 (SAL).

The protein belongs to the TRAFAC class translation factor GTPase superfamily. Classic translation factor GTPase family. EF-Tu/EF-1A subfamily. In terms of assembly, monomer.

The protein localises to the cytoplasm. The catalysed reaction is GTP + H2O = GDP + phosphate + H(+). GTP hydrolase that promotes the GTP-dependent binding of aminoacyl-tRNA to the A-site of ribosomes during protein biosynthesis. The polypeptide is Elongation factor Tu (Vibrio cholerae serotype O1 (strain ATCC 39541 / Classical Ogawa 395 / O395)).